A 538-amino-acid chain; its full sequence is Phosphoenolpyruvate carboxykinase (ATP) (538 aa).

Substrate-binding residues include Arg61, Tyr195, and Lys201. ATP is bound by residues Lys201, His220, and 236 to 244 (GLSGTGKTT). Residues Lys201 and His220 each coordinate Mn(2+). Asp257 serves as a coordination point for Mn(2+). ATP contacts are provided by Glu285, Arg323, and Thr449. A substrate-binding site is contributed by Arg323.

Belongs to the phosphoenolpyruvate carboxykinase (ATP) family. Mn(2+) serves as cofactor.

It is found in the cytoplasm. The enzyme catalyses oxaloacetate + ATP = phosphoenolpyruvate + ADP + CO2. Its pathway is carbohydrate biosynthesis; gluconeogenesis. Involved in the gluconeogenesis. Catalyzes the conversion of oxaloacetate (OAA) to phosphoenolpyruvate (PEP) through direct phosphoryl transfer between the nucleoside triphosphate and OAA. This chain is Phosphoenolpyruvate carboxykinase (ATP), found in Bradyrhizobium diazoefficiens (strain JCM 10833 / BCRC 13528 / IAM 13628 / NBRC 14792 / USDA 110).